A 609-amino-acid chain; its full sequence is Mitochondrial nucleoid-associated protein 1 (609 aa).

Over M1 to F554 the chain is Extracellular. Disordered regions lie at residues Q133–R163 and S406–H425. Residues T146–E161 show a composition bias toward basic and acidic residues. Residues G555 to W571 form a helical membrane-spanning segment. Residues S572–D609 lie on the Cytoplasmic side of the membrane.

The protein localises to the mitochondrion inner membrane. Its subcellular location is the mitochondrion matrix. It localises to the mitochondrion nucleoid. Its function is as follows. Critical regulator of mitochondrial DNA (mtDNA) abundance. Binds dsDNA throughout the mitochondrial genome without sequence specificity and controls mtDNA copy number by promoting its replication. Also plays important roles in mitochondrial metabolism and cell proliferation. The sequence is that of Mitochondrial nucleoid-associated protein 1 from Pongo abelii (Sumatran orangutan).